A 632-amino-acid chain; its full sequence is Biosynthetic arginine decarboxylase (632 aa).

At K101 the chain carries N6-(pyridoxal phosphate)lysine. Residue 281–291 participates in substrate binding; sequence FDVGGGLGVDY.

The protein belongs to the Orn/Lys/Arg decarboxylase class-II family. SpeA subfamily. Mg(2+) serves as cofactor. Requires pyridoxal 5'-phosphate as cofactor.

It catalyses the reaction L-arginine + H(+) = agmatine + CO2. It functions in the pathway amine and polyamine biosynthesis; agmatine biosynthesis; agmatine from L-arginine: step 1/1. Functionally, catalyzes the biosynthesis of agmatine from arginine. The protein is Biosynthetic arginine decarboxylase of Escherichia coli O157:H7 (strain EC4115 / EHEC).